Reading from the N-terminus, the 226-residue chain is HTH-type transcriptional regulator TcmR (226 aa).

Residues 1–16 (MDSAETDTPSTRSTPN) show a composition bias toward polar residues. A disordered region spans residues 1–25 (MDSAETDTPSTRSTPNGPGLRQRKL). Residues 26–86 (RRTRDQLIRE…TPISAIDEAF (61 aa)) enclose the HTH tetR-type domain. The H-T-H motif DNA-binding region spans 49–68 (TVEQIAEAVEVHPRTFFRHF).

It functions in the pathway antibiotic biosynthesis; tetracenomycin C biosynthesis. Represses transcription of the divergently oriented tcmR and tcmA (tetracenomycin C resistance and export) genes by binding to an intergenic operator region. This binding is inhibited by tetracenomycin C. This is HTH-type transcriptional regulator TcmR (tcmR) from Streptomyces glaucescens.